The chain runs to 294 residues: Tetraspanin-15 (294 aa).

At 1–23 (MPRGDSEQVRYCARFSYLWLKFS) the chain is on the cytoplasmic side. Residues 24–44 (LIIYSTVFWLIGGLVLSVGIY) form a helical membrane-spanning segment. Over 45–62 (AEAERQKYKTLESAFLAP) the chain is Extracellular. A helical membrane pass occupies residues 63-83 (AIILILLGVVMFIVSFIGVLA). Over 84 to 94 (SLRDNLCLLQS) the chain is Cytoplasmic. A helical membrane pass occupies residues 95 to 115 (FMYILGICLVMELIGGIVALI). The Extracellular segment spans residues 116-235 (FRNQTIDFLN…WFMDNYTIMA (120 aa)). Residue asparagine 118 is glycosylated (N-linked (GlcNAc...) asparagine). Cystine bridges form between cysteine 154–cysteine 219, cysteine 155–cysteine 185, cysteine 171–cysteine 179, and cysteine 186–cysteine 198. 2 N-linked (GlcNAc...) asparagine glycosylation sites follow: asparagine 189 and asparagine 230. Residues 236 to 256 (GLLLGILLPQFLGVLLTLLYI) form a helical membrane-spanning segment. Residues 257 to 294 (TRVEDIILEHSVTDGLLGPGAKSRTDTAGTGCCLCYPD) are Cytoplasmic-facing.

This sequence belongs to the tetraspanin (TM4SF) family. Interacts with ADAM10; the interaction influences ADAM10 substrate specificity, endocytosis and turnover. Post-translationally, palmitoylated.

The protein localises to the cell membrane. It is found in the late endosome membrane. In terms of biological role, part of TspanC8 subgroup, composed of 6 members that interact with the transmembrane metalloprotease ADAM10. This interaction is required for ADAM10 exit from the endoplasmic reticulum and for enzymatic maturation and trafficking to the cell surface as well as substrate specificity. Different TspanC8/ADAM10 complexes have distinct substrates. Promotes ADAM10-mediated cleavage of CDH2. Negatively regulates ligand-induced Notch activity probably by regulating ADAM10 activity. This Mus musculus (Mouse) protein is Tetraspanin-15 (Tspan15).